Reading from the N-terminus, the 351-residue chain is Cytoplasmic dynein 2 light intermediate chain 1 (351 aa).

This sequence belongs to the dynein light intermediate chain family. As to quaternary structure, light intermediate chain of the cytoplasmic dynein complex 2, a multisubunit complex composed at least of eleven different proteins. The cytoplasmic dynein 2 complex consists of two catalytic heavy chains (HCs) and a number of non-catalytic subunits presented by intermediate chains (ICs), light intermediate chains (LICs) and light chains (LCs). Among them, a heavy chain (DYNC2H1), two intermediate chains (DYNC2I2 and DYNC2I1), a light intermediate chain (DYNC2LI1), and a light chain (DYNLT2B) are unique to the dynein-2 complex, but a subset of light chains are also shared by dynein-1 and dynein-2 complexes. Dynein-2 complex is built around two copies of cytoplasmic dynein 2 heavy chain 1 (DYNC2H1). The C-terminal region of DYNC2H1 forms the motor domain, which converts the energy from ATP hydrolysis into movement. Its N-terminal region forms the tail, an extended structure that binds the other subunits and holds the two heavy chains in a homodimer. Interacts with DYNC2H1 (via N-terminus); this interaction stabilizes the dynein-2 complex structure. In terms of tissue distribution, expressed in bone, brain, kidney, and cartilage. Lower expression in heart, liver, lung, placenta and thymus.

It localises to the golgi apparatus. The protein resides in the cytoplasm. The protein localises to the cell projection. Its subcellular location is the cilium. It is found in the cytoskeleton. It localises to the cilium basal body. The protein resides in the cilium axoneme. The protein localises to the microtubule organizing center. Its subcellular location is the centrosome. Its function is as follows. Acts as one of several non-catalytic accessory components of the cytoplasmic dynein 2 complex (dynein-2 complex), a motor protein complex that drives the movement of cargos along microtubules within cilia and flagella in concert with the intraflagellar transport (IFT) system, facilitating the assembly of these organelles. Involved in the regulation of ciliary length. This is Cytoplasmic dynein 2 light intermediate chain 1 (DYNC2LI1) from Homo sapiens (Human).